Here is a 455-residue protein sequence, read N- to C-terminus: MFRNYTDSVQEMVLRAIDSIRDSVINASSAVSTTTLPPLDIPMTSMKPPSIIPTVELVLGTITYLVIIAMTVVGNTLVVVAVFSYRPLKKVQNYFLVSLAASDLAVAIFVMPLHVVTFLAGGKWLLGVTVCQFFTTADILLCTSSILNLCAIALDRYWAIHNPINYAQKRTTKFVCIVIVIVWILSMLISVPPIIGWNNWQENMMEDSCGLSTEKAFVVFSAAGSFFLPLLVMVVVYVKIFISARQRIRTNRGRSALMRIQNAEGDDDYRKMSIKRASVESARTSSRVGEKTPLVIADGQTTVTTLAAHSTDGGSLPKDETTKHMKYHNNGSCKVKVKDVKEDEGNPNPTAVLRKREKISVAKEKRAAKTIAVIIFVFSFCWLPFFVAYVIRPFCETCKLHAKVEQAFTWLGYINSSLNPFLYGILNLEFRRAFKKILCPKAVLEQRRRRMSAQP.

Residues 1 to 60 (MFRNYTDSVQEMVLRAIDSIRDSVINASSAVSTTTLPPLDIPMTSMKPPSIIPTVELVLG) are Extracellular-facing. Asparagine 4 and asparagine 26 each carry an N-linked (GlcNAc...) asparagine glycan. The helical transmembrane segment at 61-83 (TITYLVIIAMTVVGNTLVVVAVF) threads the bilayer. Residues 84–93 (SYRPLKKVQN) lie on the Cytoplasmic side of the membrane. The helical transmembrane segment at 94–115 (YFLVSLAASDLAVAIFVMPLHV) threads the bilayer. Residues 116–133 (VTFLAGGKWLLGVTVCQF) are Extracellular-facing. A disulfide bridge links cysteine 131 with cysteine 209. Residues 134 to 154 (FTTADILLCTSSILNLCAIAL) traverse the membrane as a helical segment. The Cytoplasmic segment spans residues 155 to 174 (DRYWAIHNPINYAQKRTTKF). A helical transmembrane segment spans residues 175–197 (VCIVIVIVWILSMLISVPPIIGW). Topologically, residues 198-221 (NNWQENMMEDSCGLSTEKAFVVFS) are extracellular. Residues 222–243 (AAGSFFLPLLVMVVVYVKIFIS) traverse the membrane as a helical segment. Topologically, residues 244-370 (ARQRIRTNRG…VAKEKRAAKT (127 aa)) are cytoplasmic. Residues 371-392 (IAVIIFVFSFCWLPFFVAYVIR) form a helical membrane-spanning segment. Residues 393 to 407 (PFCETCKLHAKVEQA) are Extracellular-facing. The helical transmembrane segment at 408–428 (FTWLGYINSSLNPFLYGILNL) threads the bilayer. Residues 429–455 (EFRRAFKKILCPKAVLEQRRRRMSAQP) are Cytoplasmic-facing.

Belongs to the G-protein coupled receptor 1 family. In terms of tissue distribution, the different isoforms are expressed in specific, but overlapping sets of sensory, inter- and motor neurons, including AIY, AIZ and RIA interneurons. They are also expressed in pharyngeal cells, head muscles and excretory gland cells.

Its subcellular location is the cell membrane. Functionally, G-protein coupled receptor for tyramine, a known neurotransmitter and neuromodulator and direct precursor of octopamine. The rank order of potency is tyramine &gt; octopamine &gt; dopamine &gt; serotonin &gt; epinephrine = norepinephrine. This Caenorhabditis elegans protein is Tyramine receptor Ser-2 (ser-2).